Here is a 1530-residue protein sequence, read N- to C-terminus: Coiled-coil domain-containing protein 141 (1530 aa).

Residue Thr-91 is modified to Phosphothreonine. Coiled coils occupy residues 642–706 (VKNE…EALM), 758–783 (VKEK…QDYE), and 861–970 (SNVS…KTSD). Positions 1210 to 1241 (SPDDISLPPLPGSPESPLAPSDMEVEEPVSSS) are disordered. The Ig-like domain occupies 1409 to 1530 (PNFSRLLSNV…VSLMYWLLTQ (122 aa)).

Interacts with DISC1. Interacts preferentially with phosphorylated forms of myosin regulatory light chain (MRLC). Interacts (via the N-terminal region) with HDAC6; inhibits the deacetylase activity of HDAC6. Interacts with KIBRA (via the C-terminal region); retains AMPAR in the cytosol after internalization. In terms of processing, ubiquitinated and degradated by the CDC20-APC/C pathway. During brain development, CDC20-APC/C complex degrades CCDC141 after centrosome translocation into the dilated area. CCDC141 is restabilized in the dilation until the centrosome enters the dilation, at which point it is once again immediately destabilized by CDC20-APC/C complex. The oscillatory regulation of CCDC141 protein is needed for proper cortical migration. Post-translationally, phosphorylation at Thr-91 by PLK1 affects CCDC141 degradation.

It is found in the cytoplasm. The protein localises to the cytoskeleton. It localises to the microtubule organizing center. Its subcellular location is the centrosome. In terms of biological role, plays a critical role in cortical radial and GnRH neurons migration during brain development. Regulates cortical radial migration by negatively controlling the activity of histone deacetylase 6 (HDAC6) and promotes centrosome maturation. CAMDI is required for dilation formation of cortical neurons during radial migration. Plays a critical role in learning and memory performance through regulation of AMPA-selective glutamate receptors (AMPARs) cell surface expression in competition with KIBRA. The chain is Coiled-coil domain-containing protein 141 (CCDC141) from Homo sapiens (Human).